The following is a 315-amino-acid chain: Protein sprouty homolog 2 (315 aa).

The segment covering 1–15 (MEARAQSGNGSQPLL) has biased composition (polar residues). The tract at residues 1–140 (MEARAQSGNG…SEQRLLGSSF (140 aa)) is disordered. Positions 20 to 32 (DGGRPRGEPDPRD) are enriched in basic and acidic residues. The segment covering 108-140 (SRSISTVSSGSRSSTRTSTSSSSSEQRLLGSSF) has biased composition (low complexity). Residues 118–315 (SRSSTRTSTS…VPRRNFEKPT (198 aa)) are required for interaction with CAV1. An SPR domain is found at 177–291 (RCEDCGKCKC…CYDRVNRPGC (115 aa)). Positions 178–315 (CEDCGKCKCK…VPRRNFEKPT (138 aa)) are required for interaction with TESK1.

This sequence belongs to the sprouty family. In terms of assembly, forms heterodimers with SPRY1. Forms a tripartite complex containing GAB1, METTL13 and SPRY2. Within the complex interacts with METTL13. Interacts with RAF1. Interacts (via C-terminus) with TESK1 (via C-terminus); the interaction disrupts SPRY2 interaction with GRB2, potentially via disruption of SPRY2 serine dephosphorylation. Interacts with PPP2R1A/PP2A-A and PPP2CA/PP2A-C; the interaction with PPP2CA/PP2A-C is inhibited by interaction with TESK1, possibly by vesicular sequestration of SPRY2. Inhibition of the interaction with the serine/threonine-protein phosphatase 2A (PP2A) holoenzyme results in loss of PP2A-mediated dephosphorylation, resulting in the loss of SPRY2 interaction with GRB2. Interacts with GRB2. Interacts with CBL/C-CBL; the interaction inhibits CBL-mediated ubiquitination of EGFR. Interacts (via C-terminus) with CAV1 (via C-terminus). Post-translationally, cleaved at Pro-144 by the prolyl endopeptidase FAP (seprase) activity (in vitro).

Its subcellular location is the cytoplasm. The protein localises to the cytoskeleton. It localises to the cell projection. It is found in the ruffle membrane. Functionally, antagonist of fibroblast growth factor (FGF) pathways via inhibition of FGF-mediated phosphorylation of ERK1/2. Thereby acts as an antagonist of FGF-induced retinal lens fiber differentiation, may inhibit limb bud outgrowth and may negatively modulate respiratory organogenesis. Inhibits TGFB-induced epithelial-to-mesenchymal transition in retinal lens epithelial cells. Inhibits CBL/C-CBL-mediated EGFR ubiquitination. This Pongo abelii (Sumatran orangutan) protein is Protein sprouty homolog 2 (SPRY2).